Consider the following 328-residue polypeptide: D-cysteine desulfhydrase (328 aa).

Position 51 is an N6-(pyridoxal phosphate)lysine (Lys51).

This sequence belongs to the ACC deaminase/D-cysteine desulfhydrase family. Homodimer. It depends on pyridoxal 5'-phosphate as a cofactor.

It carries out the reaction D-cysteine + H2O = hydrogen sulfide + pyruvate + NH4(+) + H(+). Catalyzes the alpha,beta-elimination reaction of D-cysteine and of several D-cysteine derivatives. It could be a defense mechanism against D-cysteine. The polypeptide is D-cysteine desulfhydrase (Klebsiella pneumoniae subsp. pneumoniae (strain ATCC 700721 / MGH 78578)).